A 302-amino-acid polypeptide reads, in one-letter code: Acetylglutamate kinase (302 aa).

Substrate is bound by residues 73–74 (GG), Arg95, and Asn200.

This sequence belongs to the acetylglutamate kinase family. ArgB subfamily.

The protein localises to the cytoplasm. It catalyses the reaction N-acetyl-L-glutamate + ATP = N-acetyl-L-glutamyl 5-phosphate + ADP. The protein operates within amino-acid biosynthesis; L-arginine biosynthesis; N(2)-acetyl-L-ornithine from L-glutamate: step 2/4. In terms of biological role, catalyzes the ATP-dependent phosphorylation of N-acetyl-L-glutamate. The chain is Acetylglutamate kinase from Sphingopyxis alaskensis (strain DSM 13593 / LMG 18877 / RB2256) (Sphingomonas alaskensis).